Here is a 221-residue protein sequence, read N- to C-terminus: Probable septum site-determining protein MinC (221 aa).

It belongs to the MinC family. In terms of assembly, interacts with MinD and FtsZ.

Functionally, cell division inhibitor that blocks the formation of polar Z ring septums. Rapidly oscillates between the poles of the cell to destabilize FtsZ filaments that have formed before they mature into polar Z rings. Prevents FtsZ polymerization. This chain is Probable septum site-determining protein MinC, found in Prochlorococcus marinus (strain SARG / CCMP1375 / SS120).